The following is a 145-amino-acid chain: Ribosome maturation factor RimP (145 aa).

Belongs to the RimP family.

Its subcellular location is the cytoplasm. Functionally, required for maturation of 30S ribosomal subunits. This chain is Ribosome maturation factor RimP, found in Borreliella burgdorferi (strain ZS7) (Borrelia burgdorferi).